The chain runs to 500 residues: Chromosomal replication initiator protein DnaA (500 aa).

Residues 1 to 81 form a domain I, interacts with DnaA modulators region; sequence MVNASGDPVI…LQALRTVTGE (81 aa). Residues 81-155 are domain II; that stretch reads ENMFPAFKVV…QQKMNRDPET (75 aa). The interval 156 to 377 is domain III, AAA+ region; sequence HLNKNFTFDS…GALTRVTAVA (222 aa). Positions 200, 202, 203, and 204 each coordinate ATP. Residues 378–500 form a domain IV, binds dsDNA region; it reads SLSNQPVTRA…TVRLKQSNTN (123 aa).

Belongs to the DnaA family. Oligomerizes as a right-handed, spiral filament on DNA at oriC.

It localises to the cytoplasm. Functionally, plays an essential role in the initiation and regulation of chromosomal replication. ATP-DnaA binds to the origin of replication (oriC) to initiate formation of the DNA replication initiation complex once per cell cycle. Binds the DnaA box (a 9 base pair repeat at the origin) and separates the double-stranded (ds)DNA. Forms a right-handed helical filament on oriC DNA; dsDNA binds to the exterior of the filament while single-stranded (ss)DNA is stabiized in the filament's interior. The ATP-DnaA-oriC complex binds and stabilizes one strand of the AT-rich DNA unwinding element (DUE), permitting loading of DNA polymerase. After initiation quickly degrades to an ADP-DnaA complex that is not apt for DNA replication. Binds acidic phospholipids. This chain is Chromosomal replication initiator protein DnaA, found in Bifidobacterium longum (strain DJO10A).